The following is a 258-amino-acid chain: 6-carboxyhexanoate--CoA ligase (258 aa).

The protein belongs to the BioW family. In terms of assembly, homodimer. The cofactor is Mg(2+).

It catalyses the reaction heptanedioate + ATP + CoA = 6-carboxyhexanoyl-CoA + AMP + diphosphate. The protein operates within metabolic intermediate metabolism; pimeloyl-CoA biosynthesis; pimeloyl-CoA from pimelate: step 1/1. Its function is as follows. Catalyzes the transformation of pimelate into pimeloyl-CoA with concomitant hydrolysis of ATP to AMP. This Bacillus spizizenii (strain ATCC 23059 / NRRL B-14472 / W23) (Bacillus subtilis subsp. spizizenii) protein is 6-carboxyhexanoate--CoA ligase.